The primary structure comprises 187 residues: Putative manganese efflux pump MntP (187 aa).

6 consecutive transmembrane segments (helical) span residues 3-23 (WLTI…VALA), 39-59 (LGFH…LLGM), 65-85 (ISAY…GRMV), 103-123 (GMTM…VGLS), 124-144 (IAML…VAGV), and 166-186 (ICGG…HTLL).

The protein belongs to the MntP (TC 9.B.29) family.

Its subcellular location is the cell inner membrane. Functionally, probably functions as a manganese efflux pump. The sequence is that of Putative manganese efflux pump MntP from Geobacter sp. (strain M21).